The primary structure comprises 626 residues: Putative ankyrin repeat protein R837 (626 aa).

ANK repeat units lie at residues 42–72 (EYFN…GLIR), 80–109 (TLNT…NHRY), 110–139 (SEDK…NIKS), 140–169 (RNNY…DITV), 171–199 (DYEV…DIKK), 201–230 (NKKR…DVYR), 242–269 (KNYK…YQLS), 270–298 (DTNN…LHEL), 299–328 (NLNQ…DINT), 330–358 (GNSC…RLTS), 393–416 (TIMS…KSSL), 417–446 (DYES…ITKQ), 452–479 (INNS…GINI), 480–509 (CINY…NINE), 510–539 (FGDL…NIYI), 540–569 (IKDN…DYHK), 570–599 (KNEL…KTKT), and 601–626 (FFDP…NEIK).

In Acanthamoeba polyphaga (Amoeba), this protein is Putative ankyrin repeat protein R837.